A 164-amino-acid polypeptide reads, in one-letter code: Putative 4-hydroxy-4-methyl-2-oxoglutarate aldolase (164 aa).

Substrate is bound by residues 79–82 (GDRL) and Arg-101. Position 102 (Asp-102) interacts with a divalent metal cation.

It belongs to the class II aldolase/RraA-like family. As to quaternary structure, homotrimer. The cofactor is a divalent metal cation.

The enzyme catalyses 4-hydroxy-4-methyl-2-oxoglutarate = 2 pyruvate. It catalyses the reaction oxaloacetate + H(+) = pyruvate + CO2. In terms of biological role, catalyzes the aldol cleavage of 4-hydroxy-4-methyl-2-oxoglutarate (HMG) into 2 molecules of pyruvate. Also contains a secondary oxaloacetate (OAA) decarboxylase activity due to the common pyruvate enolate transition state formed following C-C bond cleavage in the retro-aldol and decarboxylation reactions. This chain is Putative 4-hydroxy-4-methyl-2-oxoglutarate aldolase, found in Halorhodospira halophila (strain DSM 244 / SL1) (Ectothiorhodospira halophila (strain DSM 244 / SL1)).